We begin with the raw amino-acid sequence, 253 residues long: Claudin domain-containing protein 1 (253 aa).

The chain crosses the membrane as a helical span at residues F5 to A25. N42 and N72 each carry an N-linked (GlcNAc...) asparagine glycan. 3 helical membrane passes run F141–A161, I175–I195, and F216–A236.

This sequence belongs to the PMP-22/EMP/MP20 family. In the brain, highly expressed in endothelial cells of the cerebellum compared to other regions (at protein level).

Its subcellular location is the cell junction. The protein resides in the tight junction. The protein localises to the cell membrane. In terms of biological role, plays a role in negatively regulating the permeability of cells to small molecules. The polypeptide is Claudin domain-containing protein 1 (Cldnd1) (Mus musculus (Mouse)).